Reading from the N-terminus, the 114-residue chain is uncharacterized protein (114 aa).

This is an uncharacterized protein from Archaeoglobus fulgidus (strain ATCC 49558 / DSM 4304 / JCM 9628 / NBRC 100126 / VC-16).